The primary structure comprises 163 residues: MRLASPRSLFVIAFLGSALLIAIALYMEHVMGLAPCPLCIVQRICVIGFGLVCLVAAIHGPAKVGRRVYAAIAALFVAAGAATAIRQIWLQSVPADQLPSCLPSLEYMMEALPFQEIARLVLHGTAECAEVSWTMLGMSIPEWSLLGFIGMAIVCLWQLLRRD.

The Cytoplasmic portion of the chain corresponds to 1 to 9 (MRLASPRSL). The chain crosses the membrane as a helical span at residues 10–26 (FVIAFLGSALLIAIALY). Residues 27–44 (MEHVMGLAPCPLCIVQRI) are Periplasmic-facing. C36 and C39 are joined by a disulfide. A helical transmembrane segment spans residues 45–61 (CVIGFGLVCLVAAIHGP). The Cytoplasmic segment spans residues 62–67 (AKVGRR). Residues 68–85 (VYAAIAALFVAAGAATAI) traverse the membrane as a helical segment. Residues 86–142 (RQIWLQSVPADQLPSCLPSLEYMMEALPFQEIARLVLHGTAECAEVSWTMLGMSIPE) lie on the Periplasmic side of the membrane. C101 and C128 are joined by a disulfide. Residues 143-161 (WSLLGFIGMAIVCLWQLLR) form a helical membrane-spanning segment. Residues 162–163 (RD) are Cytoplasmic-facing.

It belongs to the DsbB family.

It localises to the cell inner membrane. Its function is as follows. Required for disulfide bond formation in some periplasmic proteins. Acts by oxidizing the DsbA protein. The sequence is that of Disulfide bond formation protein B from Stutzerimonas stutzeri (strain A1501) (Pseudomonas stutzeri).